Here is a 245-residue protein sequence, read N- to C-terminus: 5-oxoprolinase subunit A (245 aa).

Belongs to the LamB/PxpA family. Forms a complex composed of PxpA, PxpB and PxpC.

It carries out the reaction 5-oxo-L-proline + ATP + 2 H2O = L-glutamate + ADP + phosphate + H(+). In terms of biological role, catalyzes the cleavage of 5-oxoproline to form L-glutamate coupled to the hydrolysis of ATP to ADP and inorganic phosphate. The chain is 5-oxoprolinase subunit A from Haemophilus influenzae (strain 86-028NP).